A 315-amino-acid polypeptide reads, in one-letter code: WD repeat domain-containing protein 83 (315 aa).

WD repeat units follow at residues 23 to 62, 65 to 104, 107 to 146, 151 to 188, 190 to 228, 231 to 272, and 275 to 313; these read CGQG…LLRT, GHGY…VVRK, GHAG…PEPV, EARD…VTSD, VGSP…LLGE, GHKN…LALA, and VGSN…AEGG.

Belongs to the WD repeat MORG1 family. Interacts with EGLN3/PHD3. Interacts with ERK signaling proteins MAP2K1/MEK1, MAP2K2/MEK2, LAMTOR3, ARAF/Raf-1, MAPK1/ERK2 and MAPK3/ERK1. Identified in the spliceosome C complex. Interacts with PARD6B and CRB3. Interacts strongly with GTP-bound RRAGA but not with inactive GDP-bound. Interacts with p62/SQSTM1. Highly expressed in testis and brain. Expressed at intermediate level in heart, liver and kidney. Weakly expressed in spleen and lung and absent in muscle.

The protein resides in the cytoplasm. It localises to the lysosome. It is found in the nucleus. Its function is as follows. Molecular scaffold protein for various multimeric protein complexes. Acts as a module in the assembly of a multicomponent scaffold for the ERK pathway, linking ERK responses to specific agonists. At low concentrations it enhances ERK activation, whereas high concentrations lead to the inhibition of ERK activation. Also involved in response to hypoxia by acting as a negative regulator of HIF1A/HIF-1-alpha via its interaction with EGLN3/PHD3. May promote degradation of HIF1A. May act by recruiting signaling complexes to a specific upstream activator. May also be involved in pre-mRNA splicing. Participates in tight junction development by regulating apico-basal polarity, a key step in tissue development and organization. Mechanistically, regulates the translocation of PAR6-aPKC from the cytoplasm to the apical surface by acting as an adapter between PARD6B AND CRB3. Also acts as a negative regulator of mTORC1 under nutrient-rich conditions by binding to the active Rag GTPases to inhibit mTORC1 localization to the lysosome and phosphorylation of downstream targets. This facilitates constitutive basal autophagy during nutrient availability. The sequence is that of WD repeat domain-containing protein 83 (Wdr83) from Rattus norvegicus (Rat).